Reading from the N-terminus, the 109-residue chain is Glutaredoxin-8 (109 aa).

A Glutaredoxin domain is found at 5-109; it reads VTKAEEMIKS…EELTKIGLLP (105 aa). An intrachain disulfide couples cysteine 25 to cysteine 28.

It belongs to the glutaredoxin family. In terms of assembly, monomer.

The protein localises to the cytoplasm. In terms of biological role, glutathione-dependent oxidoreductase with lower activity compared to the other members of the glutaredoxin family. The disulfide bond functions as an electron carrier in the glutathione-dependent synthesis of deoxyribonucleotides by the enzyme ribonucleotide reductase. The polypeptide is Glutaredoxin-8 (GRX8) (Saccharomyces cerevisiae (strain ATCC 204508 / S288c) (Baker's yeast)).